The following is a 150-amino-acid chain: uncharacterized protein (150 aa).

The first 21 residues, Met-1–Gly-21, serve as a signal peptide directing secretion.

This is an uncharacterized protein from Mycobacterium tuberculosis (strain CDC 1551 / Oshkosh).